A 259-amino-acid polypeptide reads, in one-letter code: DNA-directed RNA polymerase 30 kDa polypeptide (259 aa).

Residues 155–195 form a TFIIS-type zinc finger; the sequence is YNTPCPNCKSRNTTPMMIQTRAADEPPLVRHACRDCKQHFK. The Zn(2+) site is built by C159, C162, C187, and C190. A disordered region spans residues 220-259; sequence EILPDNNPSPPESPEPASPIDDGLIRATFDRNDEPPEDDE. Residues 226 to 236 are compositionally biased toward pro residues; the sequence is NPSPPESPEPA.

The protein belongs to the poxviridae DNA-directed RNA polymerase 30 kDa subunit family. In terms of assembly, the DNA-dependent RNA polymerase (vRNAP) consists of eight subunits encoded by early viral genes and termed according to their apparent molecular masses Rpo147, Rpo132, Rpo35, Rpo30, Rpo22, Rpo19, Rpo18, and Rpo7. The same holoenzyme, with the addition of the transcription-specificity factor RAP94, is used for early gene expression.

The protein localises to the virion. It localises to the host cytoplasm. It catalyses the reaction RNA(n) + a ribonucleoside 5'-triphosphate = RNA(n+1) + diphosphate. Its function is as follows. Part of the DNA-dependent RNA polymerase which catalyzes the transcription of viral DNA into RNA using the four ribonucleoside triphosphates as substrates. Responsible for the transcription of early, intermediate and late genes. DNA-dependent RNA polymerase associates with the early transcription factor (ETF), itself composed of OPG118 and OPG134, thereby allowing the early genes transcription. Late transcription, and probably also intermediate transcription, require newly synthesized RNA polymerase. The sequence is that of DNA-directed RNA polymerase 30 kDa polypeptide (OPG066) from Monkeypox virus.